The primary structure comprises 89 residues: Small ribosomal subunit protein uS14 (89 aa).

C52, C55, C68, and C71 together coordinate Zn(2+).

It belongs to the universal ribosomal protein uS14 family. As to quaternary structure, part of the 30S ribosomal subunit. Contacts proteins S3 and S10. Zn(2+) is required as a cofactor.

Functionally, binds 16S rRNA, required for the assembly of 30S particles and may also be responsible for determining the conformation of the 16S rRNA at the A site. The chain is Small ribosomal subunit protein uS14 (rpsN) from Salinibacter ruber (strain DSM 13855 / M31).